The sequence spans 505 residues: Protein nucleotidyltransferase YdiU (505 aa).

The ATP site is built by G102, G104, R105, K125, D137, G138, R188, and R195. The active-site Proton acceptor is D264. Positions 265 and 274 each coordinate Mg(2+). D274 contributes to the ATP binding site. The interval 485 to 505 is disordered; it reads FADYGKPPAPGEEVQQTFCGT.

This sequence belongs to the SELO family. The cofactor is Mg(2+). Requires Mn(2+) as cofactor.

The enzyme catalyses L-seryl-[protein] + ATP = 3-O-(5'-adenylyl)-L-seryl-[protein] + diphosphate. It carries out the reaction L-threonyl-[protein] + ATP = 3-O-(5'-adenylyl)-L-threonyl-[protein] + diphosphate. The catalysed reaction is L-tyrosyl-[protein] + ATP = O-(5'-adenylyl)-L-tyrosyl-[protein] + diphosphate. It catalyses the reaction L-histidyl-[protein] + UTP = N(tele)-(5'-uridylyl)-L-histidyl-[protein] + diphosphate. The enzyme catalyses L-seryl-[protein] + UTP = O-(5'-uridylyl)-L-seryl-[protein] + diphosphate. It carries out the reaction L-tyrosyl-[protein] + UTP = O-(5'-uridylyl)-L-tyrosyl-[protein] + diphosphate. Nucleotidyltransferase involved in the post-translational modification of proteins. It can catalyze the addition of adenosine monophosphate (AMP) or uridine monophosphate (UMP) to a protein, resulting in modifications known as AMPylation and UMPylation. The sequence is that of Protein nucleotidyltransferase YdiU from Nitrobacter hamburgensis (strain DSM 10229 / NCIMB 13809 / X14).